The following is a 416-amino-acid chain: D-amino acid dehydrogenase (416 aa).

FAD is bound at residue 3-17; sequence VVILGAGVIGVTSAW.

This sequence belongs to the DadA oxidoreductase family. It depends on FAD as a cofactor.

The catalysed reaction is a D-alpha-amino acid + A + H2O = a 2-oxocarboxylate + AH2 + NH4(+). Its pathway is amino-acid degradation; D-alanine degradation; NH(3) and pyruvate from D-alanine: step 1/1. Its function is as follows. Oxidative deamination of D-amino acids. The polypeptide is D-amino acid dehydrogenase (Rhizorhabdus wittichii (strain DSM 6014 / CCUG 31198 / JCM 15750 / NBRC 105917 / EY 4224 / RW1) (Sphingomonas wittichii)).